Here is a 1098-residue protein sequence, read N- to C-terminus: Platelet-derived growth factor receptor beta (1098 aa).

The N-terminal stretch at 1 to 31 (MGLPGVIPALVLRGQLLLSVLWLLGPQTSRG) is a signal peptide. Residues 32 to 531 (LVITPPGPEF…VVPHSLPFKV (500 aa)) are Extracellular-facing. Ig-like C2-type domains lie at 33-119 (VITP…YIFV), 128-209 (PMDS…YSLQ), 213-308 (INVS…INIS), 330-402 (HRSR…HEDD), and 415-523 (PVRV…VTVV). N-linked (GlcNAc...) asparagine glycosylation is found at asparagine 44, asparagine 88, and asparagine 102. A disulfide bond links cysteine 53 and cysteine 99. Cysteines 148 and 189 form a disulfide. N-linked (GlcNAc...) asparagine glycosylation occurs at asparagine 214. An intrachain disulfide couples cysteine 234 to cysteine 290. Residues asparagine 291, asparagine 306, asparagine 353, asparagine 370, asparagine 444, asparagine 467, and asparagine 478 are each glycosylated (N-linked (GlcNAc...) asparagine). Cysteines 435 and 507 form a disulfide. A helical membrane pass occupies residues 532–552 (VVISAILALVVLTVISLIILI). Residues 553–1098 (MLWQKKPRYE…PLAEAEDSFL (546 aa)) lie on the Cytoplasmic side of the membrane. A phosphotyrosine; by autocatalysis mark is found at tyrosine 561, tyrosine 578, and tyrosine 580. A Protein kinase domain is found at 599–961 (LVLGRTLGSG…QLVLLLERLL (363 aa)). ATP is bound by residues 605 to 613 (LGSGAFGQV) and lysine 633. Residue tyrosine 685 is modified to Phosphotyrosine; by ABL1 and ABL2. 7 positions are modified to phosphotyrosine; by autocatalysis: tyrosine 715, tyrosine 739, tyrosine 750, tyrosine 762, tyrosine 770, tyrosine 774, and tyrosine 777. The Proton acceptor role is filled by aspartate 825. Position 856 is a phosphotyrosine; by autocatalysis (tyrosine 856). Phosphotyrosine; by ABL1 and ABL2 is present on residues tyrosine 933 and tyrosine 969. 2 positions are modified to phosphotyrosine; by autocatalysis: tyrosine 1008 and tyrosine 1020. Positions 1016 to 1098 (SDNDYIIPLP…PLAEAEDSFL (83 aa)) are disordered. The segment covering 1042-1059 (SLASSTLNEVNTSSTISC) has biased composition (polar residues). Residues 1062–1082 (PLELQEEPQQAEPEAQLEQPQ) are compositionally biased toward low complexity.

Belongs to the protein kinase superfamily. Tyr protein kinase family. CSF-1/PDGF receptor subfamily. As to quaternary structure, interacts with homodimeric PDGFB and PDGFD, and with heterodimers formed by PDGFA and PDGFB. May also interact with homodimeric PDGFC. Monomer in the absence of bound ligand. Interaction with homodimeric PDGFB, heterodimers formed by PDGFA and PDGFB or homodimeric PDGFD, leads to receptor dimerization, where both PDGFRA homodimers and heterodimers with PDGFRB are observed. Interacts with SH2B2/APS. Interacts directly (tyrosine phosphorylated) with SHB. Interacts (tyrosine phosphorylated) with PIK3R1 and RASA1. Interacts (tyrosine phosphorylated) with CBL. Interacts (tyrosine phosphorylated) with SRC and SRC family kinases. Interacts (tyrosine phosphorylated) with PIK3C2B, maybe indirectly. Interacts (tyrosine phosphorylated) with SHC1, GRB7, GRB10 and NCK1. Interaction with GRB2 is mediated by SHC1. Interacts (via C-terminus) with NHERF1. Post-translationally, autophosphorylated on tyrosine residues upon ligand binding. Autophosphorylation occurs in trans, i.e. one subunit of the dimeric receptor phosphorylates tyrosine residues on the other subunit. Phosphorylation at Tyr-578, and to a lesser degree, Tyr-580 is important for interaction with SRC. Phosphorylation at Tyr-715 is important for interaction with GRB2. Phosphorylation at Tyr-739 and Tyr-750 is important for interaction with PIK3R1. Phosphorylation at Tyr-750 is important for interaction with NCK1. Phosphorylation at Tyr-770 and Tyr-856 is important for interaction with RASA1/GAP. Phosphorylation at Tyr-856 is important for efficient phosphorylation of PLCG1 and PTPN11, resulting in increased phosphorylation of AKT1, MAPK1/ERK2 and/or MAPK3/ERK1, PDCD6IP/ALIX and STAM, and in increased cell proliferation. Phosphorylation at Tyr-1008 is important for interaction with PTPN11. Phosphorylation at Tyr-1008 and Tyr-1020 is important for interaction with PLCG1. Dephosphorylated by PTPRJ at Tyr-750, Tyr-856, Tyr-1008 and Tyr-1020. Dephosphorylated by PTPN2 at Tyr-578 and Tyr-1020. N-glycosylated. In terms of processing, ubiquitinated. After autophosphorylation, the receptor is polyubiquitinated, leading to its degradation. As to expression, weakly expressed in glomerular mesangial cells and interstitial cells. Up-regulated in areas of renal fibrosis. In mice with unilateral ureteral obstruction, increased expression in interstitial cells at day 4 and expression is markedly elevated at day 7 and is maximal at day 14.

The protein resides in the cell membrane. It localises to the cytoplasmic vesicle. Its subcellular location is the lysosome lumen. It catalyses the reaction L-tyrosyl-[protein] + ATP = O-phospho-L-tyrosyl-[protein] + ADP + H(+). Present in an inactive conformation in the absence of bound ligand. Binding of PDGFB and/or PDGFD leads to dimerization and activation by autophosphorylation on tyrosine residues. Tyrosine-protein kinase that acts as a cell-surface receptor for homodimeric PDGFB and PDGFD and for heterodimers formed by PDGFA and PDGFB, and plays an essential role in the regulation of embryonic development, cell proliferation, survival, differentiation, chemotaxis and migration. Plays an essential role in blood vessel development by promoting proliferation, migration and recruitment of pericytes and smooth muscle cells to endothelial cells. Plays a role in the migration of vascular smooth muscle cells and the formation of neointima at vascular injury sites. Required for normal development of the cardiovascular system. Required for normal recruitment of pericytes (mesangial cells) in the kidney glomerulus, and for normal formation of a branched network of capillaries in kidney glomeruli. Promotes rearrangement of the actin cytoskeleton and the formation of membrane ruffles. Binding of its cognate ligands - homodimeric PDGFB, heterodimers formed by PDGFA and PDGFB or homodimeric PDGFD -leads to the activation of several signaling cascades; the response depends on the nature of the bound ligand and is modulated by the formation of heterodimers between PDGFRA and PDGFRB. Phosphorylates PLCG1, PIK3R1, PTPN11, RASA1/GAP, CBL, SHC1 and NCK1. Activation of PLCG1 leads to the production of the cellular signaling molecules diacylglycerol and inositol 1,4,5-trisphosphate, mobilization of cytosolic Ca(2+) and the activation of protein kinase C. Phosphorylation of PIK3R1, the regulatory subunit of phosphatidylinositol 3-kinase, leads to the activation of the AKT1 signaling pathway. Phosphorylation of SHC1, or of the C-terminus of PTPN11, creates a binding site for GRB2, resulting in the activation of HRAS, RAF1 and down-stream MAP kinases, including MAPK1/ERK2 and/or MAPK3/ERK1. Promotes phosphorylation and activation of SRC family kinases. Promotes phosphorylation of PDCD6IP/ALIX and STAM. Receptor signaling is down-regulated by protein phosphatases that dephosphorylate the receptor and its down-stream effectors, and by rapid internalization of the activated receptor. This chain is Platelet-derived growth factor receptor beta (Pdgfrb), found in Mus musculus (Mouse).